We begin with the raw amino-acid sequence, 635 residues long: MAKYRGKPFQLYVKLSCSTMMATSIILTNILPYDAQAASEKDTEITKEILSKQDLLDKVDKAIRQIEQLKQLSASSKEHYKAQLNEAKTASQIDEIIKRANELDSKDNKSSHTEMNGQSDIDSKLDQLLKDLNEVSSNVDRGQQSGEDDLNAMKNDMSQTATTKHGEKDDKNDEAMVNKALEDLDHLNQQIHKSKDASKDTSEDPAVSTTDNNHEVAKTPNNDGSGHVVLNKFLSNEENQSHSNRLTDKLQGSDKINHAMIEKLAKSNASTQHYTYHKLNTLQSLDQRIANTQLPKNQKSDLMSEVNKTKERIKSQRNIILEELARTDDKKYATQSILESIFNKDEAVKILKDIRVDGKTDQQIADQITRHIDQLSLTTSDDLLTSLIDQSQDKSLLISQILQTKLGKAEADKLAKDWTNKGLSNRQIVDQLKKHFASTGDTSSDDILKAILNNAKDKKQAIETILATRIERQKAKLLADLITKIETDQNKIFNLVKSALNGKADDLLNLQKRLNQTKKDIDYILSPIVNRPSLLDRLNKNGKTTDLNKLANLMNQGSDLLDSIPDIPTPKPEKTLTLGKGNGLLSGLLNADGNVSLPKAGETIKEHWLPISVIVGAMGVLMIWLSRRNKLKNKA.

The first 37 residues, 1-37, serve as a signal peptide directing secretion; it reads MAKYRGKPFQLYVKLSCSTMMATSIILTNILPYDAQA. Composition is skewed to basic and acidic residues over residues 101–112 and 193–202; these read NELDSKDNKSSH and KSKDASKDTS. Disordered stretches follow at residues 101-122 and 192-228; these read NELD…SDID and HKSK…SGHV. Residues 597–601 carry the LPXTG sorting signal motif; the sequence is LPKAG. Residue A600 is modified to Pentaglycyl murein peptidoglycan amidated alanine. The propeptide at 601–635 is removed by sortase; sequence GETIKEHWLPISVIVGAMGVLMIWLSRRNKLKNKA.

The protein localises to the secreted. Its subcellular location is the cell wall. This chain is Surface protein F, found in Staphylococcus aureus (strain NCTC 8325 / PS 47).